The sequence spans 153 residues: Nucleoside diphosphate kinase (153 aa).

ATP-binding residues include Lys-11, Phe-59, Arg-87, Thr-93, Arg-104, and Asn-114. The Pros-phosphohistidine intermediate role is filled by His-117.

It belongs to the NDK family. The cofactor is Mg(2+).

The enzyme catalyses a 2'-deoxyribonucleoside 5'-diphosphate + ATP = a 2'-deoxyribonucleoside 5'-triphosphate + ADP. It catalyses the reaction a ribonucleoside 5'-diphosphate + ATP = a ribonucleoside 5'-triphosphate + ADP. In terms of biological role, major role in the synthesis of nucleoside triphosphates other than ATP. The ATP gamma phosphate is transferred to the NDP beta phosphate via a ping-pong mechanism, using a phosphorylated active-site intermediate. The polypeptide is Nucleoside diphosphate kinase (swoH) (Emericella nidulans (strain FGSC A4 / ATCC 38163 / CBS 112.46 / NRRL 194 / M139) (Aspergillus nidulans)).